Reading from the N-terminus, the 603-residue chain is Arginine--tRNA ligase (603 aa).

Positions 143-153 (PNIAKEMHVGH) match the 'HIGH' region motif.

It belongs to the class-I aminoacyl-tRNA synthetase family. In terms of assembly, monomer.

It localises to the cytoplasm. The catalysed reaction is tRNA(Arg) + L-arginine + ATP = L-arginyl-tRNA(Arg) + AMP + diphosphate. In Prochlorococcus marinus (strain MIT 9211), this protein is Arginine--tRNA ligase.